The sequence spans 340 residues: Glycerol-3-phosphate dehydrogenase [NAD(P)+] (340 aa).

Residues tryptophan 11, arginine 33, and lysine 110 each coordinate NADPH. Positions 110, 144, and 146 each coordinate sn-glycerol 3-phosphate. Alanine 148 contacts NADPH. 5 residues coordinate sn-glycerol 3-phosphate: lysine 199, aspartate 252, serine 262, arginine 263, and asparagine 264. Catalysis depends on lysine 199, which acts as the Proton acceptor. Arginine 263 provides a ligand contact to NADPH. Residues valine 287 and glutamate 289 each coordinate NADPH.

Belongs to the NAD-dependent glycerol-3-phosphate dehydrogenase family.

The protein resides in the cytoplasm. It catalyses the reaction sn-glycerol 3-phosphate + NAD(+) = dihydroxyacetone phosphate + NADH + H(+). The catalysed reaction is sn-glycerol 3-phosphate + NADP(+) = dihydroxyacetone phosphate + NADPH + H(+). It functions in the pathway membrane lipid metabolism; glycerophospholipid metabolism. In terms of biological role, catalyzes the reduction of the glycolytic intermediate dihydroxyacetone phosphate (DHAP) to sn-glycerol 3-phosphate (G3P), the key precursor for phospholipid synthesis. The chain is Glycerol-3-phosphate dehydrogenase [NAD(P)+] from Polynucleobacter necessarius subsp. necessarius (strain STIR1).